The sequence spans 142 residues: Small ribosomal subunit protein bS6 (142 aa).

The disordered stretch occupies residues 96 to 142; that stretch reads VTGQSEMLKAEENRSERRERRERPEHDGSADGDDSDSDSDNSDNADE. A compositionally biased stretch (basic and acidic residues) spans 103 to 124; sequence LKAEENRSERRERRERPEHDGS. Residues 125 to 142 are compositionally biased toward acidic residues; that stretch reads ADGDDSDSDSDNSDNADE.

It belongs to the bacterial ribosomal protein bS6 family.

Functionally, binds together with bS18 to 16S ribosomal RNA. The chain is Small ribosomal subunit protein bS6 from Pseudomonas fluorescens (strain Pf0-1).